The following is a 104-amino-acid chain: PTS system lactose-specific EIIA component (104 aa).

Residues 1–102 (MNRDEVQLLG…MKHLIELYKK (102 aa)) form the PTS EIIA type-3 domain. The Tele-phosphohistidine intermediate role is filled by histidine 78. Histidine 78 carries the post-translational modification Phosphohistidine; by HPr. Aspartate 81 serves as a coordination point for Mg(2+).

Homotrimer. It depends on Mg(2+) as a cofactor.

It is found in the cytoplasm. Functionally, the phosphoenolpyruvate-dependent sugar phosphotransferase system (sugar PTS), a major carbohydrate active transport system, catalyzes the phosphorylation of incoming sugar substrates concomitantly with their translocation across the cell membrane. The enzyme II LacEF PTS system is involved in lactose transport. The polypeptide is PTS system lactose-specific EIIA component (Staphylococcus epidermidis (strain ATCC 35984 / DSM 28319 / BCRC 17069 / CCUG 31568 / BM 3577 / RP62A)).